The sequence spans 147 residues: Large ribosomal subunit protein bL9 (147 aa).

This sequence belongs to the bacterial ribosomal protein bL9 family.

Binds to the 23S rRNA. The protein is Large ribosomal subunit protein bL9 of Flavobacterium psychrophilum (strain ATCC 49511 / DSM 21280 / CIP 103535 / JIP02/86).